Here is a 219-residue protein sequence, read N- to C-terminus: Small ribosomal subunit protein uS3 (219 aa).

Residues 38–106 form the KH type-2 domain; the sequence is IRKFIEKRLV…RVHINIVEIK (69 aa).

This sequence belongs to the universal ribosomal protein uS3 family. In terms of assembly, part of the 30S ribosomal subunit. Forms a tight complex with proteins S10 and S14.

Its function is as follows. Binds the lower part of the 30S subunit head. Binds mRNA in the 70S ribosome, positioning it for translation. The protein is Small ribosomal subunit protein uS3 of Levilactobacillus brevis (strain ATCC 367 / BCRC 12310 / CIP 105137 / JCM 1170 / LMG 11437 / NCIMB 947 / NCTC 947) (Lactobacillus brevis).